We begin with the raw amino-acid sequence, 745 residues long: Polyribonucleotide nucleotidyltransferase (745 aa).

Asp487 and Asp493 together coordinate Mg(2+). Positions 554–613 (PSTTTIKIDKDKIRDIIGPGGKVIKEICEISGAKIDISDDGTVSIYASDRDKLKVALDKI) constitute a KH domain. One can recognise an S1 motif domain in the interval 623–691 (GEIFNGTVMK…NKGKAKLTIK (69 aa)). Positions 691–745 (KNADKDKSSNNTKPKTNAKDNSEPEQRRDSSKKRAWNEDNNAETAEVITERKYFN) are disordered. Basic and acidic residues predominate over residues 707 to 719 (NAKDNSEPEQRRD).

This sequence belongs to the polyribonucleotide nucleotidyltransferase family. It depends on Mg(2+) as a cofactor.

It localises to the cytoplasm. It carries out the reaction RNA(n+1) + phosphate = RNA(n) + a ribonucleoside 5'-diphosphate. In terms of biological role, involved in mRNA degradation. Catalyzes the phosphorolysis of single-stranded polyribonucleotides processively in the 3'- to 5'-direction. The protein is Polyribonucleotide nucleotidyltransferase of Rickettsia massiliae (strain Mtu5).